The following is a 41-amino-acid chain: Large ribosomal subunit protein bL36 (41 aa).

Belongs to the bacterial ribosomal protein bL36 family.

The polypeptide is Large ribosomal subunit protein bL36 (Orientia tsutsugamushi (strain Boryong) (Rickettsia tsutsugamushi)).